Consider the following 391-residue polypeptide: Deoxyguanosinetriphosphate triphosphohydrolase-like protein (391 aa).

In terms of domain architecture, HD spans 62–198; it reads RLTHSLEVST…ASLADDISYI (137 aa).

Belongs to the dGTPase family. Type 2 subfamily.

This chain is Deoxyguanosinetriphosphate triphosphohydrolase-like protein, found in Rickettsia akari (strain Hartford).